The primary structure comprises 330 residues: Ribosomal RNA small subunit methyltransferase H (330 aa).

S-adenosyl-L-methionine-binding positions include 50 to 52 (GGH), Asp-69, Leu-103, Asp-117, and Gln-124.

The protein belongs to the methyltransferase superfamily. RsmH family.

Its subcellular location is the cytoplasm. The catalysed reaction is cytidine(1402) in 16S rRNA + S-adenosyl-L-methionine = N(4)-methylcytidine(1402) in 16S rRNA + S-adenosyl-L-homocysteine + H(+). In terms of biological role, specifically methylates the N4 position of cytidine in position 1402 (C1402) of 16S rRNA. This chain is Ribosomal RNA small subunit methyltransferase H, found in Saccharopolyspora erythraea (strain ATCC 11635 / DSM 40517 / JCM 4748 / NBRC 13426 / NCIMB 8594 / NRRL 2338).